Here is a 552-residue protein sequence, read N- to C-terminus: MSDMEKPWKEEEKREVLAGHARRQAPQAVDKGPVTGDQRISVTVVLRRQRGDELEAHVERQAALAPHARVHLEREAFAASHGASLDDFAEIRKFAEAHGLTLDRAHVAAGTAVLSGPVDAVNQAFGVELRHFDHPDGSYRSYVGDVRVPASIAPLIEAVFGLDTRPVARPHFRLRRRAEGEFEARSQSAAPTAYTPLDVAQAYQFPEGLDGQGQCIAIIELGGGYDETSLAQYFASLGVSAPQVVSVSVDGATNQPTGDPNGPDGEVELDIEVAGALAPGAKIAVYFAPNTDAGFLNAITTAVHDPTHKPSIVSISWGGPEDSWAPASIAAMNRAFLDAAALGVTVLAAAGDSGSTDGEQDGLYHVDFPAASPYVLACGGTRLVASAGRIERETVWNDGPDGGSTGGGVSRIFPLPSWQERANVPPSANPGAGSGRGVPDVAGNADPATGYEVVIDGETTVIGGTSAVAPLFAALVARINQKLGKPVGYLNPTLYQLPPEVFHDITEGNNDIANRARIYQAGPGWDPCTGLGSPIGIRLLQALLPSASQAQP.

The span at 1–17 shows a compositional bias: basic and acidic residues; sequence MSDMEKPWKEEEKREVL. Residues 1–34 form a disordered region; the sequence is MSDMEKPWKEEEKREVLAGHARRQAPQAVDKGPV. In terms of domain architecture, Peptidase S53 spans 193 to 546; that stretch reads AYTPLDVAQA…IRLLQALLPS (354 aa). Catalysis depends on charge relay system residues E266, D270, and S466. Positions 504, 505, 522, 524, and 526 each coordinate Ca(2+).

As to quaternary structure, forms monomeric and dimeric crystals. It depends on Ca(2+) as a cofactor. Post-translationally, autocatalytically processed.

It localises to the secreted. It carries out the reaction The enzyme preferentially hydrolyzes peptides having an Ala or Pro residue at P2 position and prefers such charged amino acid residues as Glu or Arg at the P2' position. In the oxidized insulin B chain, kumamolysin preferentially cleaves between Leu(15) and Tyr(16).. Its activity is regulated as follows. Inactivated at 22.4 and 37 degrees Celsius, but not at 60 degrees Celsius, by aldehyde-type inhibitors such as acetyl-Ile-Ala-Phe-CHO and acetyl-Ile-Pro-Phe-CHO. Insensitive to the known carboxyl proteinase inhibitors pepstatin, diazoacetyl-DL-norleucine methyl ester (DAN) and 1,2-epoxy-3-(p-nitrophenoxy)propane (EPNP). Not inhibited by Ala-Ala-Phe-chloromethylketone, an inhibitor of the human tripeptidyl-peptidase 1. Thermostable pepstatin-insensitive serine-carboxyl proteinase. Preferentially hydrolyzes synthetic peptides having an Ala or Pro residue at the P2 position and charged amino acids such as Glu or Arg at the P2' position. In vitro, specifically hydrolyzes the Leu-15-Tyr-16 peptide bond in oxidized insulin B-chain. Additional cleavage of oxidized insulin B-chain at Phe-25-Tyr-26 is detected at a considerably lower rate. Can hydrolyze collagen and the chromogenic substrate azocoll. Shows lower activity with albumin and casein. Shows very weak tripeptidyl peptidase activity. This chain is Kumamolisin, found in Bacillus sp. (strain MN-32).